The chain runs to 294 residues: ATP phosphoribosyltransferase (294 aa).

This sequence belongs to the ATP phosphoribosyltransferase family. Long subfamily. The cofactor is Mg(2+).

It localises to the cytoplasm. It catalyses the reaction 1-(5-phospho-beta-D-ribosyl)-ATP + diphosphate = 5-phospho-alpha-D-ribose 1-diphosphate + ATP. It participates in amino-acid biosynthesis; L-histidine biosynthesis; L-histidine from 5-phospho-alpha-D-ribose 1-diphosphate: step 1/9. Feedback inhibited by histidine. Functionally, catalyzes the condensation of ATP and 5-phosphoribose 1-diphosphate to form N'-(5'-phosphoribosyl)-ATP (PR-ATP). Has a crucial role in the pathway because the rate of histidine biosynthesis seems to be controlled primarily by regulation of HisG enzymatic activity. The polypeptide is ATP phosphoribosyltransferase (Chlorobium phaeobacteroides (strain DSM 266 / SMG 266 / 2430)).